We begin with the raw amino-acid sequence, 135 residues long: Retinol-binding protein 1 (135 aa).

The tract at residues 22 to 32 (RALDVNVALRK) is important for interaction with STRA6. Residues Lys-41, Met-63, and Gln-109 each coordinate all-trans-retinol.

This sequence belongs to the calycin superfamily. Fatty-acid binding protein (FABP) family. In terms of assembly, interacts (only as retinol-free apoprotein) with STRA6.

It is found in the cytoplasm. The protein localises to the lipid droplet. Cytoplasmic retinol-binding protein. Accepts retinol from the transport protein STRA6, and thereby contributes to retinol uptake, storage and retinoid homeostasis. The chain is Retinol-binding protein 1 (Rbp1) from Rattus norvegicus (Rat).